Here is a 214-residue protein sequence, read N- to C-terminus: Leucyl/phenylalanyl-tRNA--protein transferase (214 aa).

It belongs to the L/F-transferase family.

It localises to the cytoplasm. The enzyme catalyses N-terminal L-lysyl-[protein] + L-leucyl-tRNA(Leu) = N-terminal L-leucyl-L-lysyl-[protein] + tRNA(Leu) + H(+). It carries out the reaction N-terminal L-arginyl-[protein] + L-leucyl-tRNA(Leu) = N-terminal L-leucyl-L-arginyl-[protein] + tRNA(Leu) + H(+). The catalysed reaction is L-phenylalanyl-tRNA(Phe) + an N-terminal L-alpha-aminoacyl-[protein] = an N-terminal L-phenylalanyl-L-alpha-aminoacyl-[protein] + tRNA(Phe). Functions in the N-end rule pathway of protein degradation where it conjugates Leu, Phe and, less efficiently, Met from aminoacyl-tRNAs to the N-termini of proteins containing an N-terminal arginine or lysine. The chain is Leucyl/phenylalanyl-tRNA--protein transferase from Cereibacter sphaeroides (strain ATCC 17023 / DSM 158 / JCM 6121 / CCUG 31486 / LMG 2827 / NBRC 12203 / NCIMB 8253 / ATH 2.4.1.) (Rhodobacter sphaeroides).